Consider the following 492-residue polypeptide: 2,3-bisphosphoglycerate-independent phosphoglycerate mutase (492 aa).

D11 and S61 together coordinate Mn(2+). S61 functions as the Phosphoserine intermediate in the catalytic mechanism. Residues H118, 147–148, R178, R184, 248–251, and K320 each bind substrate; these read RD and RNDR. The Mn(2+) site is built by D386, H390, D427, H428, and H445.

Belongs to the BPG-independent phosphoglycerate mutase family. In terms of assembly, monomer. The cofactor is Mn(2+).

It catalyses the reaction (2R)-2-phosphoglycerate = (2R)-3-phosphoglycerate. The protein operates within carbohydrate degradation; glycolysis; pyruvate from D-glyceraldehyde 3-phosphate: step 3/5. Functionally, catalyzes the interconversion of 2-phosphoglycerate and 3-phosphoglycerate. The sequence is that of 2,3-bisphosphoglycerate-independent phosphoglycerate mutase from Campylobacter jejuni subsp. jejuni serotype O:6 (strain 81116 / NCTC 11828).